The following is a 326-amino-acid chain: Vestitone reductase (326 aa).

NADP(+) contacts are provided by residues 12 to 18, R37, and Y164; that span reads GGTGFLG.

It belongs to the NAD(P)-dependent epimerase/dehydratase family. Dihydroflavonol-4-reductase subfamily. In terms of assembly, monomer. Detected in roots, and at lower levels in root nodules. Not detected in petioles, leaf and stem.

The catalysed reaction is a (3R,4R)-4,2'-dihydroxyisoflavan + NADP(+) = a (3R)-2'-hydroxyisoflavanone + NADPH + H(+). Inhibited by vestitone concentrations above 50 uM. Stereospecific enzyme that catalyzes the NADPH-dependent reduction of (3R)-vestitone to (3R,4R)-4'-methoxyisoflavan-2',4,7-triol (DMI). Has no activity with (3S)-vestitone. Catalyzes the penultimate step in the biosynthesis of the phytoalexin medicarpin, and thereby contributes to plant defense reactions. The sequence is that of Vestitone reductase from Medicago sativa (Alfalfa).